A 153-amino-acid chain; its full sequence is Cytochrome c-type biogenesis protein CcmE (153 aa).

Residues 1-6 lie on the Cytoplasmic side of the membrane; that stretch reads MNARRR. A helical; Signal-anchor for type II membrane protein membrane pass occupies residues 7–27; the sequence is LWSVLMLILAVGTAATLTIMA. The Periplasmic segment spans residues 28–153; it reads LRHNLTYLYM…LDTPIAETTP (126 aa). Heme-binding residues include histidine 121 and tyrosine 125. A compositionally biased stretch (polar residues) spans 131 to 141; sequence ANKMQPTPTQH. Residues 131–153 form a disordered region; sequence ANKMQPTPTQHTHLDTPIAETTP.

It belongs to the CcmE/CycJ family.

The protein resides in the cell inner membrane. Heme chaperone required for the biogenesis of c-type cytochromes. Transiently binds heme delivered by CcmC and transfers the heme to apo-cytochromes in a process facilitated by CcmF and CcmH. This is Cytochrome c-type biogenesis protein CcmE from Xylella fastidiosa (strain Temecula1 / ATCC 700964).